Consider the following 247-residue polypeptide: 1-(5-phosphoribosyl)-5-[(5-phosphoribosylamino)methylideneamino] imidazole-4-carboxamide isomerase (247 aa).

The Proton acceptor role is filled by aspartate 8. Catalysis depends on aspartate 131, which acts as the Proton donor.

Belongs to the HisA/HisF family.

It is found in the cytoplasm. It catalyses the reaction 1-(5-phospho-beta-D-ribosyl)-5-[(5-phospho-beta-D-ribosylamino)methylideneamino]imidazole-4-carboxamide = 5-[(5-phospho-1-deoxy-D-ribulos-1-ylimino)methylamino]-1-(5-phospho-beta-D-ribosyl)imidazole-4-carboxamide. The protein operates within amino-acid biosynthesis; L-histidine biosynthesis; L-histidine from 5-phospho-alpha-D-ribose 1-diphosphate: step 4/9. The sequence is that of 1-(5-phosphoribosyl)-5-[(5-phosphoribosylamino)methylideneamino] imidazole-4-carboxamide isomerase from Acidovorax sp. (strain JS42).